A 196-amino-acid chain; its full sequence is MKPFVVFVLGGPGAGKGTQCERIVQKYGYTHLSAGDLLRDERKKPDSQYGELIESYIRDGRIVPVEITISLLQRAMEQTMALDGNKHKFLIDGFPRNEDNLQGWERTMNGKADVSFVLFFDCDNETCIERCLERGKSSGRSDDNRESLEKRIQTYLQSTRPIIDLYEKTGKVKKVDASKSVDEVFTKVQDIFDREG.

Position 13–18 (13–18 (GAGKGT)) interacts with ATP. The segment at 33–63 (SAGDLLRDERKKPDSQYGELIESYIRDGRIV) is NMP. Residues arginine 39, 61-63 (RIV), and 93-96 (GFPR) contribute to the a ribonucleoside 5'-phosphate site. Position 100 (asparagine 100) interacts with CMP. An LID region spans residues 133–143 (ERGKSSGRSDD). Arginine 134 lines the ATP pocket. The a ribonucleoside 5'-phosphate site is built by arginine 140 and arginine 151. Position 179 (lysine 179) interacts with ATP.

It belongs to the adenylate kinase family. UMP-CMP kinase subfamily. As to quaternary structure, monomer. Mg(2+) is required as a cofactor.

It localises to the cytoplasm. Its subcellular location is the nucleus. It carries out the reaction CMP + ATP = CDP + ADP. It catalyses the reaction dCMP + ATP = dCDP + ADP. The catalysed reaction is UMP + ATP = UDP + ADP. The enzyme catalyses a 2'-deoxyribonucleoside 5'-diphosphate + ATP = a 2'-deoxyribonucleoside 5'-triphosphate + ADP. It carries out the reaction a ribonucleoside 5'-diphosphate + ATP = a ribonucleoside 5'-triphosphate + ADP. Its function is as follows. Catalyzes the phosphorylation of pyrimidine nucleoside monophosphates at the expense of ATP. Plays an important role in de novo pyrimidine nucleotide biosynthesis. Has preference for UMP and CMP as phosphate acceptors. Also displays broad nucleoside diphosphate kinase activity. This is UMP-CMP kinase (cmpk1) from Xenopus tropicalis (Western clawed frog).